Here is a 109-residue protein sequence, read N- to C-terminus: Putative gametogenetin-binding protein 1 (109 aa).

Residues Lys24–Glu109 are interaction with GGN.

As to quaternary structure, interacts with CCDC159. Interacts with GGN.

The protein resides in the cytoplasm. It localises to the membrane. It is found in the golgi apparatus. Functionally, may be involved in spermatogenesis. The polypeptide is Putative gametogenetin-binding protein 1 (GGNBP1) (Homo sapiens (Human)).